We begin with the raw amino-acid sequence, 765 residues long: Probable beta-glucosidase M (765 aa).

A signal peptide spans 1–19 (MHSISALLSLLGGLALSSA). N-linked (GlcNAc...) asparagine glycosylation is found at N24, N71, N93, N126, and N258. The active site involves D286. N-linked (GlcNAc...) asparagine glycans are attached at residues N314, N321, N432, N519, N541, and N647.

Belongs to the glycosyl hydrolase 3 family.

Its subcellular location is the secreted. The catalysed reaction is Hydrolysis of terminal, non-reducing beta-D-glucosyl residues with release of beta-D-glucose.. Its pathway is glycan metabolism; cellulose degradation. Its function is as follows. Beta-glucosidases are one of a number of cellulolytic enzymes involved in the degradation of cellulosic biomass. Catalyzes the last step releasing glucose from the inhibitory cellobiose. This Aspergillus niger (strain ATCC MYA-4892 / CBS 513.88 / FGSC A1513) protein is Probable beta-glucosidase M (bglM).